Here is a 223-residue protein sequence, read N- to C-terminus: Glycosylphosphatidylinositol anchor biosynthesis protein 11 (223 aa).

6 consecutive transmembrane segments (helical) span residues 25–45 (LAVV…SAGI), 52–72 (VMTQ…VVVL), 88–108 (MIAA…LVLF), 120–140 (FVCA…TYHL), 158–178 (VYAA…PIPY), and 189–209 (ITIL…GIAL).

This sequence belongs to the PIGF family.

It is found in the endoplasmic reticulum membrane. Its pathway is glycolipid biosynthesis; glycosylphosphatidylinositol-anchor biosynthesis. Functionally, acts in the GPI biosynthetic pathway between GlcNAc-PI synthesis and GPI transfer to protein. The sequence is that of Glycosylphosphatidylinositol anchor biosynthesis protein 11 (GPI11) from Yarrowia lipolytica (strain CLIB 122 / E 150) (Yeast).